The chain runs to 118 residues: Ribonuclease P protein component (118 aa).

The protein belongs to the RnpA family. In terms of assembly, consists of a catalytic RNA component (M1 or rnpB) and a protein subunit.

It carries out the reaction Endonucleolytic cleavage of RNA, removing 5'-extranucleotides from tRNA precursor.. RNaseP catalyzes the removal of the 5'-leader sequence from pre-tRNA to produce the mature 5'-terminus. It can also cleave other RNA substrates such as 4.5S RNA. The protein component plays an auxiliary but essential role in vivo by binding to the 5'-leader sequence and broadening the substrate specificity of the ribozyme. The chain is Ribonuclease P protein component from Rickettsia felis (strain ATCC VR-1525 / URRWXCal2) (Rickettsia azadi).